Here is a 219-residue protein sequence, read N- to C-terminus: UPF0502 protein HCH_06091 (219 aa).

It belongs to the UPF0502 family.

The protein is UPF0502 protein HCH_06091 of Hahella chejuensis (strain KCTC 2396).